A 382-amino-acid chain; its full sequence is Probable inactive dehydrogenase easA (382 aa).

Residues 25-27 (PMT), Ala-60, Gln-102, and His-171 each bind FMN. Residues His-171 and Asn-174 each coordinate substrate. Residues Lys-223, Gly-299, 324–325 (GR), and Arg-325 each bind FMN. Tyr-352 contributes to the substrate binding site.

This sequence belongs to the NADH:flavin oxidoreductase/NADH oxidase family.

Probable inactive dehydrogenase; part of the gene cluster that mediates the biosynthesis of fungal ergot alkaloid. DmaW catalyzes the first step of ergot alkaloid biosynthesis by condensing dimethylallyl diphosphate (DMAP) and tryptophan to form 4-dimethylallyl-L-tryptophan. The second step is catalyzed by the methyltransferase easF that methylates 4-dimethylallyl-L-tryptophan in the presence of S-adenosyl-L-methionine, resulting in the formation of 4-dimethylallyl-L-abrine. The catalase easC and the FAD-dependent oxidoreductase easE then transform 4-dimethylallyl-L-abrine to chanoclavine-I which is further oxidized by easD in the presence of NAD(+), resulting in the formation of chanoclavine-I aldehyde. Agroclavine dehydrogenase easG then mediates the conversion of chanoclavine-I aldehyde to agroclavine via a non-enzymatic adduct reaction: the substrate is an iminium intermediate that is formed spontaneously from chanoclavine-I aldehyde in the presence of glutathione. Further conversion of agroclavine to paspalic acid is a two-step process involving oxidation of agroclavine to elymoclavine and of elymoclavine to paspalic acid, the second step being performed by the elymoclavine oxidase cloA. However, cloA does not encode a functional enzyme indicating that C.fusiformis terminates its ergot alkaloid pathway at elymoclavine. The protein is Probable inactive dehydrogenase easA of Claviceps fusiformis (Ergot fungus).